Here is a 121-residue protein sequence, read N- to C-terminus: Acid shock protein (121 aa).

A signal peptide spans 1-21 (MKKVLALMVAATLGLSSVAFA). A propeptide spanning residues 22–63 (ADTTATATPAATSTTATVAAQTKATQHQKHKVTKKTTEQKAQ) is cleaved from the precursor. The segment at 40–121 (AAQTKATQHQ…AKKPVAAPAA (82 aa)) is disordered. A compositionally biased stretch (low complexity) spans 74–83 (VQKAPVQKAQ). Residues 84 to 93 (AAKKHVKKAS) are compositionally biased toward basic residues. Over residues 94–103 (VQKAPVQKAQ) the composition is skewed to low complexity. Basic residues predominate over residues 104–113 (AAKKHHKTAK).

This sequence belongs to the Asr family. In terms of processing, proteolytic processing gives rise to the active protein.

The protein resides in the periplasm. In terms of biological role, required for growth and/or survival at acidic conditions. The polypeptide is Acid shock protein (Yersinia pseudotuberculosis serotype O:1b (strain IP 31758)).